The primary structure comprises 1032 residues: UPF0182 protein sll1060 (1032 aa).

Transmembrane regions (helical) follow at residues 27–49 (WVKGAIVLAIALVGLEVIARIYV), 69–87 (WQGSIALITGFISWGFIVF), 144–166 (VLLPLIIVLQLILISLVMYYVFI), 197–219 (FSGMGSQLGVTALAGMLALIGVL), 226–248 (PGLVFILSAVWGLLLSGNWFRLL), 283–300 (WWRGLFLFSLLGVTLIIL), 321–339 (HISALGAAVALTLGVEHWL), 364–386 (LPVETGLAIFSMAIAIWLGWLSV), and 406–428 (IIGLWLPVAVYLLILLLQNLGGW).

The protein belongs to the UPF0182 family.

It localises to the cell membrane. The protein is UPF0182 protein sll1060 of Synechocystis sp. (strain ATCC 27184 / PCC 6803 / Kazusa).